Here is an 80-residue protein sequence, read N- to C-terminus: Acyl carrier protein (80 aa).

The Carrier domain occupies 4–79 (EAILEKVRSI…DAVKYIEEKQ (76 aa)). S39 is subject to O-(pantetheine 4'-phosphoryl)serine.

The protein belongs to the acyl carrier protein (ACP) family. In terms of processing, 4'-phosphopantetheine is transferred from CoA to a specific serine of apo-ACP by AcpS. This modification is essential for activity because fatty acids are bound in thioester linkage to the sulfhydryl of the prosthetic group.

The protein resides in the cytoplasm. It participates in lipid metabolism; fatty acid biosynthesis. Carrier of the growing fatty acid chain in fatty acid biosynthesis. This Prochlorococcus marinus (strain NATL1A) protein is Acyl carrier protein.